A 581-amino-acid chain; its full sequence is Leucine-rich repeat-containing protein 15 (581 aa).

A signal peptide spans 1–21 (MPLKHYLLLLVGCQAWGAGLA). Residues 22–53 (YHGCPSECTCSRASQVECTGARIVAVPTPLPW) enclose the LRRNT domain. The Extracellular portion of the chain corresponds to 22 to 538 (YHGCPSECTC…VWGMTQAQSG (517 aa)). LRR repeat units lie at residues 54–75 (NAMSLQILNTHITELNESPFLN), 78–99 (ALIALRIEKNELSRITPGAFRN), 102–123 (SLRYLSLANNKLQVLPIGLFQG), 126–147 (SLESLLLSSNQLLQIQPAHFSQ), 150–171 (NLKELQLHGNHLEYIPDGAFDH), 174–195 (GLTKLNLGKNSLTHISPRVFQH), 198–219 (NLQVLRLYENRLTDIPMGTFDG), 222–243 (NLQELALQQNQIGLLSPGLFHN), 246–267 (NLQRLYLSNNHISQLPPSVFMQ), 270–291 (QLNRLTLFGNSLKELSPGIFGP), 294–315 (NLRELWLYDNHISSLPDNVFSN), 318–339 (QLQVLILSRNQISFISPGAFNG), 342–363 (ELRELSLHTNALQDLDGNVFRM), 366–387 (NLQNISLQNNRLRQLPGNIFAN), and 390–411 (GLMAIQLQNNQLENLPLGIFDH). An N-linked (GlcNAc...) asparagine glycan is attached at asparagine 75. Residue asparagine 369 is glycosylated (N-linked (GlcNAc...) asparagine). One can recognise an LRRCT domain in the interval 423-475 (NPWRCDSDILPLRNWLLLNQPRLGTDTVPVCFSPANVRGQSLIIINVNVAVPS). Residues 489-509 (WYPDTPSYPDTTSVSSTTELT) are disordered. Residues 499 to 509 (TTSVSSTTELT) are compositionally biased toward low complexity. The chain crosses the membrane as a helical span at residues 539 to 559 (LAIAAIVIGIVALACSLAACV). The Cytoplasmic segment spans residues 560 to 581 (GCCCCKKRSQAVLMQMKAPNEC).

In terms of assembly, (Microbial infection) Interacts with human coronavirus SARS-CoV-2 spike protein (via RBD domain); the interaction is direct and sequesters virions at the cell surface. As to quaternary structure, (Microbial infection) Interacts with human coronavirus SARS-CoV-2 spike protein (via RBD domain); the interaction is direct. In terms of tissue distribution, expressed in brain and placenta. Expressed in lung fibroblasts. Expressed in chodrocytes.

Its subcellular location is the cell membrane. (Microbial infection) Modulates the ability of SARS-CoV-2 to infect host cells through interaction with the spike protein. Does not act as a SARS-CoV-2 entry receptor but sequesters virions and antagonizes in trans SARS-CoV-2 infection of ACE2(+) cells when expressed on nearby cells. The polypeptide is Leucine-rich repeat-containing protein 15 (LRRC15) (Homo sapiens (Human)).